Reading from the N-terminus, the 310-residue chain is Ribosomal RNA small subunit methyltransferase H (310 aa).

S-adenosyl-L-methionine is bound by residues 33 to 35 (AGH), aspartate 53, phenylalanine 79, aspartate 100, and glutamine 107.

This sequence belongs to the methyltransferase superfamily. RsmH family.

The protein resides in the cytoplasm. It carries out the reaction cytidine(1402) in 16S rRNA + S-adenosyl-L-methionine = N(4)-methylcytidine(1402) in 16S rRNA + S-adenosyl-L-homocysteine + H(+). Its function is as follows. Specifically methylates the N4 position of cytidine in position 1402 (C1402) of 16S rRNA. This chain is Ribosomal RNA small subunit methyltransferase H, found in Clostridium tetani (strain Massachusetts / E88).